A 152-amino-acid polypeptide reads, in one-letter code: Nucleoside diphosphate kinase (152 aa).

Residues Lys-11, Phe-59, Arg-87, Thr-93, Arg-104, and Asn-114 each contribute to the ATP site. His-117 (pros-phosphohistidine intermediate) is an active-site residue.

This sequence belongs to the NDK family. As to quaternary structure, homotetramer. Requires Mg(2+) as cofactor.

It localises to the cytoplasm. It carries out the reaction a 2'-deoxyribonucleoside 5'-diphosphate + ATP = a 2'-deoxyribonucleoside 5'-triphosphate + ADP. The catalysed reaction is a ribonucleoside 5'-diphosphate + ATP = a ribonucleoside 5'-triphosphate + ADP. In terms of biological role, major role in the synthesis of nucleoside triphosphates other than ATP. The ATP gamma phosphate is transferred to the NDP beta phosphate via a ping-pong mechanism, using a phosphorylated active-site intermediate. The chain is Nucleoside diphosphate kinase from Prochlorococcus marinus (strain MIT 9313).